A 492-amino-acid chain; its full sequence is DEAD-box ATP-dependent RNA helicase RhpA (492 aa).

Residues 20 to 48 (PSFNDLGLKESVLKSVYEAGFTSPSPIQE) carry the Q motif motif. Positions 51-220 (IPAVLQGRDV…DKILENPIKI (170 aa)) constitute a Helicase ATP-binding domain. Residue 64–71 (AQTGTGKT) participates in ATP binding. A DEAD box motif is present at residues 168–171 (DESD). The Helicase C-terminal domain maps to 231-393 (DITQRFYVIN…EIPTINENQI (163 aa)). Positions 445–492 (AIQNPKEKTPKPSHKKTPQHERARSFKKGQHRDRHPKTNHHSKKPKRR) are disordered. Over residues 469 to 492 (SFKKGQHRDRHPKTNHHSKKPKRR) the composition is skewed to basic residues.

Belongs to the DEAD box helicase family. In terms of assembly, homodimer. Interacts with RNase J (rnj), might be a member of a minimal RNA degradosome complex.

The protein localises to the cytoplasm. The catalysed reaction is ATP + H2O = ADP + phosphate + H(+). In terms of biological role, DEAD-box RNA helicase probably involved in RNA degradation. Unwinds dsRNA in both 5'- and 3'-directions. Background RNA-dependent ATPase activity is stimulated about 5-fold by RNaseJ (rnj). Stimulates the dsRNase activity of RNase J. The protein is DEAD-box ATP-dependent RNA helicase RhpA (rhpA) of Helicobacter pylori (strain B128).